The following is an 855-amino-acid chain: Photoactivated adenylate cyclase subunit beta-like protein 1224-5/9F (855 aa).

One can recognise a BLUF 1 domain in the interval 56-149; the sequence is LRRLMYLSKG…GRMSGVWHMK (94 aa). The interval 420–444 is disordered; sequence RPPIFDDTPKCNPRPRTPGCEGRQR. The 93-residue stretch at 471–563 folds into the BLUF 2 domain; the sequence is VPTLTYISHA…RVYPSEWTLT (93 aa). The segment covering 813-827 has biased composition (basic and acidic residues); it reads RSGEKPLTEPEEAKL. Residues 813 to 855 are disordered; it reads RSGEKPLTEPEEAKLDFSPGRVRHGDSGRRSNSAQGKLSIQVR. Positions 842–855 are enriched in polar residues; the sequence is RSNSAQGKLSIQVR.

In terms of assembly, heterotetramer of two alpha and two beta subunits.

The protein resides in the cell projection. It localises to the cilium. It is found in the flagellum. The protein is Photoactivated adenylate cyclase subunit beta-like protein 1224-5/9F of Euglena gracilis.